Consider the following 42-residue polypeptide: uncharacterized protein (42 aa).

This is an uncharacterized protein from Pasteurella multocida (strain Pm70).